The chain runs to 2134 residues: Tudor domain-containing protein 6 (2134 aa).

Positions 287-315 are disordered; the sequence is RAPVGTDDEDSGSATWEEREESPDKPGSP. A Phosphothreonine modification is found at Thr292. Tudor domains follow at residues 309-368, 542-599, 820-879, and 1038-1092; these read PDKP…YFRM, RPEP…FRQL, YEGD…FFQV, and TLAP…AHDV. The disordered stretch occupies residues 1271–1296; sequence SPMSGTKLDSALPERRMGEPSGRDLP. The span at 1282–1296 shows a compositional bias: basic and acidic residues; sequence LPERRMGEPSGRDLP. 2 consecutive Tudor domains span residues 1358–1417 and 1570–1630; these read QWQS…DAVL and CPQI…LLLV. Disordered regions lie at residues 1699-1733 and 1860-1885; these read KKYA…GLKK and LQHS…LSPG. Basic and acidic residues predominate over residues 1711-1722; sequence LSSEKRGPERKG. 2 positions are modified to phosphoserine: Ser1723 and Ser1726. Residue Ser1925 is modified to Phosphoserine. The segment covering 1930 to 1939 has biased composition (polar residues); sequence AVSQDIQGSR. The segment at 1930-1985 is disordered; it reads AVSQDIQGSRCSEDERKAGYMGSSDDDHSRSPLLQHGKGGNSPAHDGRNLSEEEFP. 3 positions are modified to phosphoserine: Ser1980, Ser2063, and Ser2115.

In terms of assembly, found in a mRNP complex (i.e. messenger ribonucleoproteins which correspond to mRNA with bound proteins), at least composed of TDRD1, TDRD6, TDRD7 and DDX4. Found in a complex, at least composed of PIWIL1, PIWIL2, DDX4 and TDRD6. Interacts with Tex19.1 and probably Tex19.2. Interacts with PRMT5. Interacts with SNRPB (when methylated); to trigger spliceosome formation. Undergoes proteolytic cleavage near the C-terminal by an unknown protease during the transition from meiosis I to meiosis II in primary spermatocytes. Testis specific. Expressed in primary spermatocytes at post natal (PN) day 17.5. Expressed in midpachytene stage of primary spermatocytes at PN16 and in round spermatids at PN22 (at protein level).

It localises to the cytoplasm. Tudor domain-containing protein involved in germ cell development, more specifically the formation of chromatoid body (during spermiogenesis), Balbiani body (during oogenesis), germ plasm (upon fertilization), and for proper miRNA expression and spliceosome maturation. Essential for RNA-dependent helicase UPF1 localization to chromatoid body, for UPF1-UPF2 and UPF1-DDX4 interactions which are required for mRNA degradation, using the extended 3' UTR-triggered nonsense-mediated mRNA decay (NMD) pathway. Involved in spliceosome maturation and mRNA splicing in prophase I spermatocytes through interaction with arginine N-methyltransferase PRMT5 and symmetrically arginine dimethylated SNRPB (small nuclear ribonucleoprotein-associated protein). This chain is Tudor domain-containing protein 6, found in Mus musculus (Mouse).